The chain runs to 264 residues: Rhamnosyltransferase WbbL (264 aa).

The protein belongs to the glycosyltransferase 2 family.

The protein operates within bacterial outer membrane biogenesis; lipopolysaccharide biosynthesis. In terms of biological role, rhamnosyltransferase involved in lipopolysaccharide biosynthesis. The protein is Rhamnosyltransferase WbbL (wbbL) of Escherichia coli (strain K12).